A 441-amino-acid polypeptide reads, in one-letter code: Probable indole-3-acetic acid-amido synthetase GH3.9 (441 aa).

The protein belongs to the IAA-amido conjugating enzyme family. In terms of tissue distribution, expressed in etiolated seedlings and roots.

In terms of biological role, may catalyze the synthesis of indole-3-acetic acid (IAA)-amino acid conjugates, providing a mechanism for the plant to cope with the presence of excess auxin. The sequence is that of Probable indole-3-acetic acid-amido synthetase GH3.9 (GH3.9) from Oryza sativa subsp. japonica (Rice).